A 305-amino-acid polypeptide reads, in one-letter code: Foldase protein PrsA (305 aa).

A signal peptide spans 1–19 (MKKWFIALAGLLLTVTLAG). Cys-20 carries the N-palmitoyl cysteine lipid modification. Cys-20 carries S-diacylglycerol cysteine lipidation. The PpiC domain maps to 136–235 (EPEVSVAHIL…YGYHVILMLK (100 aa)).

Belongs to the PrsA family.

Its subcellular location is the cell membrane. The enzyme catalyses [protein]-peptidylproline (omega=180) = [protein]-peptidylproline (omega=0). Functionally, plays a major role in protein secretion by helping the post-translocational extracellular folding of several secreted proteins. The chain is Foldase protein PrsA from Levilactobacillus brevis (strain ATCC 367 / BCRC 12310 / CIP 105137 / JCM 1170 / LMG 11437 / NCIMB 947 / NCTC 947) (Lactobacillus brevis).